The sequence spans 586 residues: Ferredoxin--nitrite reductase, chloroplastic (586 aa).

Over residues 1–18 (MTSFSLTFTSPLLPSSST) the composition is skewed to low complexity. Positions 1-20 (MTSFSLTFTSPLLPSSSTKP) are disordered. A chloroplast-targeting transit peptide spans 1-25 (MTSFSLTFTSPLLPSSSTKPKRSVL). A Glycyl lysine isopeptide (Lys-Gly) (interchain with G-Cter in ubiquitin) cross-link involves residue lysine 103. Positions 464, 470, 505, and 509 each coordinate [4Fe-4S] cluster. Residue cysteine 509 coordinates siroheme.

Belongs to the nitrite and sulfite reductase 4Fe-4S domain family. In terms of assembly, monomer. The cofactor is siroheme. [4Fe-4S] cluster is required as a cofactor.

Its subcellular location is the plastid. It localises to the chloroplast. It catalyses the reaction 6 oxidized [2Fe-2S]-[ferredoxin] + NH4(+) + 2 H2O = nitrite + 6 reduced [2Fe-2S]-[ferredoxin] + 8 H(+). It functions in the pathway nitrogen metabolism; nitrate reduction (assimilation). Catalyzes the six-electron reduction of nitrite to ammonium. The chain is Ferredoxin--nitrite reductase, chloroplastic (NIR1) from Arabidopsis thaliana (Mouse-ear cress).